Consider the following 337-residue polypeptide: Dihydroorotate dehydrogenase (quinone) (337 aa).

FMN contacts are provided by residues 62–66 and threonine 86; that span reads AGLDK. Lysine 66 lines the substrate pocket. Position 111–115 (111–115) interacts with substrate; sequence NRMGF. FMN contacts are provided by asparagine 140 and asparagine 173. A substrate-binding site is contributed by asparagine 173. Serine 176 serves as the catalytic Nucleophile. Asparagine 178 is a binding site for substrate. Residues lysine 218 and threonine 246 each coordinate FMN. 247–248 contacts substrate; sequence NT. Residues glycine 269, glycine 298, and 319–320 contribute to the FMN site; that span reads YS.

Belongs to the dihydroorotate dehydrogenase family. Type 2 subfamily. As to quaternary structure, monomer. Requires FMN as cofactor.

The protein localises to the cell membrane. It catalyses the reaction (S)-dihydroorotate + a quinone = orotate + a quinol. Its pathway is pyrimidine metabolism; UMP biosynthesis via de novo pathway; orotate from (S)-dihydroorotate (quinone route): step 1/1. Catalyzes the conversion of dihydroorotate to orotate with quinone as electron acceptor. In Wigglesworthia glossinidia brevipalpis, this protein is Dihydroorotate dehydrogenase (quinone).